A 342-amino-acid polypeptide reads, in one-letter code: MRIEEFDYELPPGQIAQQPVEPRDASRLLVLHREGGFLEHRHFYDLPRYLHPGDVLVVNETKVIPARLWGYRAGTGAKIEVLLLTRQEGDTWETLVRPGRRVPVGAELIFGRGELQARVKGVTPAGGRIMEFSYQEGPWEALLERLGEMPLPPYIKEKPADPGRYQTVYAREEGSAAAPTAGLHFTPRLLKELREQGIEIASILLHVGLGTFRPVKVENIQEHVMHAEYYAVTPAAAATINAARARGHRVVAVGTTVVRTLETVATADGVIHAGSGWTDIFIYPGYRFKAIDSLITNFHLPRSTLLMLVSAFAGREKILDAYRVAVREGYRFYSFGDAMLIL.

It belongs to the QueA family. In terms of assembly, monomer.

It localises to the cytoplasm. It carries out the reaction 7-aminomethyl-7-carbaguanosine(34) in tRNA + S-adenosyl-L-methionine = epoxyqueuosine(34) in tRNA + adenine + L-methionine + 2 H(+). Its pathway is tRNA modification; tRNA-queuosine biosynthesis. Functionally, transfers and isomerizes the ribose moiety from AdoMet to the 7-aminomethyl group of 7-deazaguanine (preQ1-tRNA) to give epoxyqueuosine (oQ-tRNA). This is S-adenosylmethionine:tRNA ribosyltransferase-isomerase from Moorella thermoacetica (strain ATCC 39073 / JCM 9320).